A 625-amino-acid polypeptide reads, in one-letter code: Chromatin structure-remodeling complex subunit RSC4 (625 aa).

The segment at 1 to 35 is disordered; it reads MVVKKRKLATEAGGSDERPKYLPGKHPKNQEKTPH. 2 consecutive Bromo domains span residues 53–158 and 181–292; these read WHIP…VLKA and KLVD…IQKE. S199 and S545 each carry phosphoserine. Over residues 536 to 552 the composition is skewed to polar residues; it reads RTSNVNSNLSQPQQQEN. Positions 536 to 555 are disordered; it reads RTSNVNSNLSQPQQQENDVI.

Component of the two forms of the RSC complex composed of at least either RSC1 or RSC2, and ARP7, ARP9, LDB7, NPL6, RSC3, RSC30, RSC4, RSC58, RSC6, RSC8, RSC9, SFH1, STH1, HTL1 and probably RTT102. The complexes interact with histone and histone variant components of centromeric chromatin.

The protein localises to the nucleus. Functionally, component of the chromatin structure remodeling complex (RSC), which is involved in transcription regulation and nucleosome positioning. RSC is responsible for the transfer of a histone octamer from a nucleosome core particle to naked DNA. The reaction requires ATP and involves an activated RSC-nucleosome intermediate. Remodeling reaction also involves DNA translocation, DNA twist and conformational change. As a reconfigurer of centromeric and flanking nucleosomes, RSC complex is required both for proper kinetochore function in chromosome segregation and, via a PKC1-dependent signaling pathway, for organization of the cellular cytoskeleton. In Saccharomyces cerevisiae (strain ATCC 204508 / S288c) (Baker's yeast), this protein is Chromatin structure-remodeling complex subunit RSC4 (RSC4).